The following is a 40-amino-acid chain: Lucifensin (40 aa).

Intrachain disulfides connect Cys-3-Cys-30, Cys-16-Cys-36, and Cys-20-Cys-38.

This sequence belongs to the invertebrate defensin family. Type 1 subfamily. In terms of processing, the disulfide bonds are essential for antimicrobial activity. In terms of tissue distribution, larval fat body, hemolymph and salivary glands (at protein level).

It is found in the secreted. Shows strong antibacterial activity against the Gram-positive bacterium M.luteus. Also shows antibacterial activity against the Gram-positive bacteria E.fecalis, S.aureus, S.carnosus, S.pneumoniae and S.pyogenes and against a number of methicillin-resistant S.aureus and glycopeptide-intermediate S.aureus isolates. Does not show antibacterial activity against Gram-negative bacteria or antifungal activity against C.utilis. Shows slight antifungal activity against C.albicans. The chain is Lucifensin from Lucilia cuprina (Green bottle fly).